A 692-amino-acid chain; its full sequence is Elongation factor G (692 aa).

Positions Asp8–Leu283 constitute a tr-type G domain. Residues Ala17–Thr24, Asp81–His85, and Asn135–Asp138 contribute to the GTP site.

It belongs to the TRAFAC class translation factor GTPase superfamily. Classic translation factor GTPase family. EF-G/EF-2 subfamily.

It localises to the cytoplasm. Catalyzes the GTP-dependent ribosomal translocation step during translation elongation. During this step, the ribosome changes from the pre-translocational (PRE) to the post-translocational (POST) state as the newly formed A-site-bound peptidyl-tRNA and P-site-bound deacylated tRNA move to the P and E sites, respectively. Catalyzes the coordinated movement of the two tRNA molecules, the mRNA and conformational changes in the ribosome. This Rhodospirillum rubrum (strain ATCC 11170 / ATH 1.1.1 / DSM 467 / LMG 4362 / NCIMB 8255 / S1) protein is Elongation factor G.